We begin with the raw amino-acid sequence, 556 residues long: Oxygen-dependent choline dehydrogenase (556 aa).

Residue 4-33 (DYIIIGAGSAGNVLATRLTEDPNTTVLLLE) coordinates FAD. Residue histidine 473 is the Proton acceptor of the active site.

Belongs to the GMC oxidoreductase family. The cofactor is FAD.

It localises to the cell membrane. It carries out the reaction choline + A = betaine aldehyde + AH2. The enzyme catalyses betaine aldehyde + NAD(+) + H2O = glycine betaine + NADH + 2 H(+). It functions in the pathway amine and polyamine biosynthesis; betaine biosynthesis via choline pathway; betaine aldehyde from choline (cytochrome c reductase route): step 1/1. Its function is as follows. Involved in the biosynthesis of the osmoprotectant glycine betaine. Catalyzes the oxidation of choline to betaine aldehyde and betaine aldehyde to glycine betaine at the same rate. In Escherichia coli O6:H1 (strain CFT073 / ATCC 700928 / UPEC), this protein is Oxygen-dependent choline dehydrogenase.